We begin with the raw amino-acid sequence, 523 residues long: 2-isopropylmalate synthase (523 aa).

Positions 5-267 (VIIFDTTLRD…HTAINHQEIW (263 aa)) constitute a Pyruvate carboxyltransferase domain. Residues Asp-14, His-202, His-204, and Asn-238 each coordinate Mn(2+). Residues 392-523 (RLDYFSVQSG…QHNENNKETV (132 aa)) form a regulatory domain region.

Belongs to the alpha-IPM synthase/homocitrate synthase family. LeuA type 1 subfamily. Homodimer. Requires Mn(2+) as cofactor.

Its subcellular location is the cytoplasm. It catalyses the reaction 3-methyl-2-oxobutanoate + acetyl-CoA + H2O = (2S)-2-isopropylmalate + CoA + H(+). The protein operates within amino-acid biosynthesis; L-leucine biosynthesis; L-leucine from 3-methyl-2-oxobutanoate: step 1/4. Catalyzes the condensation of the acetyl group of acetyl-CoA with 3-methyl-2-oxobutanoate (2-ketoisovalerate) to form 3-carboxy-3-hydroxy-4-methylpentanoate (2-isopropylmalate). The polypeptide is 2-isopropylmalate synthase (Escherichia coli (strain SMS-3-5 / SECEC)).